We begin with the raw amino-acid sequence, 324 residues long: Germination protease (324 aa).

Positions 1–10 (MIIVLGIRTD) are excised as a propeptide.

This sequence belongs to the peptidase A25 family. As to quaternary structure, homotetramer. Post-translationally, autoproteolytically processed. The inactive tetrameric zymogen termed p46 autoprocesses to a smaller form termed p41, which is active only during spore germination.

It catalyses the reaction Endopeptidase action with P4 Glu or Asp, P1 preferably Glu &gt; Asp, P1' hydrophobic and P2' Ala.. Initiates the rapid degradation of small, acid-soluble proteins during spore germination. The polypeptide is Germination protease (Caldanaerobacter subterraneus subsp. tengcongensis (strain DSM 15242 / JCM 11007 / NBRC 100824 / MB4) (Thermoanaerobacter tengcongensis)).